The primary structure comprises 414 residues: MQHNKLREVRGTKDLLDDELYRFQYIQHLAQTIASRYGFIPVDTPIIEFTEVFTKLGNTSDIVTKEMYNFKDKAGEDITLRPEFTSAIVRLLISKNLTIPVKLFSSGPVFRYERPQKCRQRQFHQINFEFFGSDSPIADVEMISLCYNILSELKLSDRIKLEINFLGDQETINSYKIHLVEYLNKYQKDLSEDSQRRLVVNPLRILDSKSPEDCKILLNAPSISDFYTQNSQNFFKEVLDGLDNLSINYVINHNIVRGLDYYCKTVFEFTTSELGSQNSVIAGGRYDGLVKSMGGHSTPAIGFAAGVERLSALIDYEHKKPKRIVLIPIGDDATSYAIKLAYELRCKGIHVCWNNYRGTSLKNELRKANDTDIVLIFGDEELQSNTVKVKDMKTGDQQNVAVCDLLDNLLHRIV.

It belongs to the class-II aminoacyl-tRNA synthetase family. As to quaternary structure, homodimer.

The protein localises to the cytoplasm. The catalysed reaction is tRNA(His) + L-histidine + ATP = L-histidyl-tRNA(His) + AMP + diphosphate + H(+). This Ehrlichia ruminantium (strain Gardel) protein is Histidine--tRNA ligase.